A 79-amino-acid polypeptide reads, in one-letter code: Serine protease inhibitor Kazal-type 1 (79 aa).

The signal sequence occupies residues 1–18 (MKVAIIFLLSALALLSLA). Residues 26 to 79 (NGKTPNCPKQIMGCPRIYDPVCGTNGITYPSECSLCFENRKFGTSIHIQRRGTC) enclose the Kazal-like domain. Disulfide bonds link C32–C61, C39–C58, and C47–C79.

It localises to the secreted. Its function is as follows. Serine protease inhibitor which exhibits anti-trypsin activity. In the pancreas, protects against trypsin-catalyzed premature activation of zymogens. In terms of biological role, in the male reproductive tract, binds to sperm heads where it modulates sperm capacitance by inhibiting calcium uptake and nitrogen oxide (NO) production. This Rattus norvegicus (Rat) protein is Serine protease inhibitor Kazal-type 1.